We begin with the raw amino-acid sequence, 339 residues long: DNA-directed RNA polymerase subunit alpha (339 aa).

Positions 1-238 (MVDPIVTKNW…EQLSIFINFD (238 aa)) are alpha N-terminal domain (alpha-NTD). The interval 255 to 339 (LNENLFRSVD…KAAPQGAPKV (85 aa)) is alpha C-terminal domain (alpha-CTD).

This sequence belongs to the RNA polymerase alpha chain family. As to quaternary structure, homodimer. The RNAP catalytic core consists of 2 alpha, 1 beta, 1 beta' and 1 omega subunit. When a sigma factor is associated with the core the holoenzyme is formed, which can initiate transcription.

The enzyme catalyses RNA(n) + a ribonucleoside 5'-triphosphate = RNA(n+1) + diphosphate. In terms of biological role, DNA-dependent RNA polymerase catalyzes the transcription of DNA into RNA using the four ribonucleoside triphosphates as substrates. The chain is DNA-directed RNA polymerase subunit alpha from Anaeromyxobacter sp. (strain Fw109-5).